Reading from the N-terminus, the 244-residue chain is Chalcone--flavanone isomerase (244 aa).

Substrate is bound by residues threonine 57, asparagine 122, and serine 199.

Belongs to the chalcone isomerase family.

The catalysed reaction is a chalcone = a flavanone.. Its pathway is secondary metabolite biosynthesis; flavonoid biosynthesis. Catalyzes the intramolecular cyclization of bicyclic chalcones into tricyclic (S)-flavanones. Responsible for the isomerization of 4,2',4',6'-tetrahydroxychalcone (also termed chalcone) into naringenin. The protein is Chalcone--flavanone isomerase (CHI) of Arabidopsis lyrata subsp. petraea (Northern rock-cress).